The primary structure comprises 629 residues: Ribosomal protein S6 kinase 2 beta (629 aa).

The Protein kinase 1 domain occupies 62 to 321 (FVLLKVLGQG…AEELKRHPFF (260 aa)). ATP-binding positions include 68 to 76 (LGQGSFGKV) and lysine 94. Aspartate 187 serves as the catalytic Proton acceptor. Residue serine 221 is modified to Phosphoserine. The region spanning 322–391 (STIDWNKLYR…VAPVLVEEDA (70 aa)) is the AGC-kinase C-terminal domain. Threonine 359 is subject to Phosphothreonine. Phosphoserine is present on serine 363. Position 380 is a phosphoserine; by autocatalysis (serine 380). Residues 416 to 629 (YTVRETIGVG…PEEILARIGS (214 aa)) form the Protein kinase 2 domain. ATP contacts are provided by residues 422–430 (IGVGSYSVC) and lysine 445. Aspartate 533 functions as the Proton acceptor in the catalytic mechanism. Residue threonine 571 is modified to Phosphothreonine.

This sequence belongs to the protein kinase superfamily. AGC Ser/Thr protein kinase family. S6 kinase subfamily. The cofactor is Mg(2+). Autophosphorylated on Ser-380, as part of the activation process.

It carries out the reaction L-seryl-[protein] + ATP = O-phospho-L-seryl-[protein] + ADP + H(+). The catalysed reaction is L-threonyl-[protein] + ATP = O-phospho-L-threonyl-[protein] + ADP + H(+). With respect to regulation, activated by multiple phosphorylations on threonine and serine residues. Functionally, serine/threonine kinase that may play a role in mediating the growth-factor and stress induced activation of transcription. This is Ribosomal protein S6 kinase 2 beta from Xenopus laevis (African clawed frog).